Here is a 235-residue protein sequence, read N- to C-terminus: Enolase-phosphatase E1 (235 aa).

This sequence belongs to the HAD-like hydrolase superfamily. MasA/MtnC family. In terms of assembly, monomer. The cofactor is Mg(2+).

It carries out the reaction 5-methylsulfanyl-2,3-dioxopentyl phosphate + H2O = 1,2-dihydroxy-5-(methylsulfanyl)pent-1-en-3-one + phosphate. It functions in the pathway amino-acid biosynthesis; L-methionine biosynthesis via salvage pathway; L-methionine from S-methyl-5-thio-alpha-D-ribose 1-phosphate: step 3/6. The protein operates within amino-acid biosynthesis; L-methionine biosynthesis via salvage pathway; L-methionine from S-methyl-5-thio-alpha-D-ribose 1-phosphate: step 4/6. In terms of biological role, bifunctional enzyme that catalyzes the enolization of 2,3-diketo-5-methylthiopentyl-1-phosphate (DK-MTP-1-P) into the intermediate 2-hydroxy-3-keto-5-methylthiopentenyl-1-phosphate (HK-MTPenyl-1-P), which is then dephosphorylated to form the acireductone 1,2-dihydroxy-3-keto-5-methylthiopentene (DHK-MTPene). The sequence is that of Enolase-phosphatase E1 from Parvibaculum lavamentivorans (strain DS-1 / DSM 13023 / NCIMB 13966).